A 225-amino-acid chain; its full sequence is Phosphoribosyltransferase domain-containing protein 1 (225 aa).

Position 2 is an N-acetylalanine (alanine 2). 2 residues coordinate Mg(2+): glutamate 141 and aspartate 142. GMP contacts are provided by residues glutamate 141 to threonine 149, lysine 173, phenylalanine 194 to valine 195, and aspartate 201. Residue aspartate 201 participates in Mg(2+) binding.

This sequence belongs to the purine/pyrimidine phosphoribosyltransferase family. As to quaternary structure, homodimer.

Has low, barely detectable phosphoribosyltransferase activity (in vitro). Binds GMP, IMP and alpha-D-5-phosphoribosyl 1-pyrophosphate (PRPP). Is not expected to contribute to purine metabolism or GMP salvage. The protein is Phosphoribosyltransferase domain-containing protein 1 (PRTFDC1) of Homo sapiens (Human).